The primary structure comprises 230 residues: uncharacterized protein (230 aa).

Positions 2 to 69 constitute an S4 RNA-binding domain; it reads HRLAKIISNA…KPRLWIYYKP (68 aa). Residue Asp-102 is the Nucleophile of the active site.

Belongs to the pseudouridine synthase RsuA family.

The enzyme catalyses a uridine in RNA = a pseudouridine in RNA. This is an uncharacterized protein from Rickettsia conorii (strain ATCC VR-613 / Malish 7).